We begin with the raw amino-acid sequence, 626 residues long: (R)-linalool synthase 2, chloroplastic (626 aa).

A chloroplast-targeting transit peptide spans 1-21; it reads MAFVSIAPLASRCCVHKSFVS. Positions 377, 381, and 529 each coordinate Mg(2+). A DDXXD motif motif is present at residues 377–381; that stretch reads DDIYD.

It belongs to the terpene synthase family. Tpsd subfamily. Requires Mg(2+) as cofactor. The cofactor is Mn(2+).

The protein resides in the plastid. It is found in the chloroplast. It catalyses the reaction (2E)-geranyl diphosphate + H2O = (R)-linalool + diphosphate. It functions in the pathway terpene metabolism; oleoresin biosynthesis. Functionally, terpene synthase (mono-TPS) involved in the biosynthesis of monoterpene natural products included in conifer oleoresin secretions and volatile emissions; these compounds contribute to biotic and abiotic stress defense against herbivores and pathogens. Catalyzes the conversion of (2E)-geranyl diphosphate (GPP) to (R)-linalool. The chain is (R)-linalool synthase 2, chloroplastic from Picea sitchensis (Sitka spruce).